A 290-amino-acid polypeptide reads, in one-letter code: uncharacterized protein (290 aa).

The Schiff-base intermediate with substrate role is filled by Lys-203.

This sequence belongs to the DeoC/FbaB aldolase family.

This is an uncharacterized protein from Pasteurella multocida (strain Pm70).